The primary structure comprises 153 residues: Alpha-amylase type B isozyme (153 aa).

Substrate contacts are provided by residues Lys19, 25 to 27 (GWW), His38, Gln44, Lys123, and Trp150.

The protein belongs to the glycosyl hydrolase 13 family. Monomer. Requires Ca(2+) as cofactor.

The catalysed reaction is Endohydrolysis of (1-&gt;4)-alpha-D-glucosidic linkages in polysaccharides containing three or more (1-&gt;4)-alpha-linked D-glucose units.. The sequence is that of Alpha-amylase type B isozyme (AMY1.4) from Hordeum vulgare (Barley).